The sequence spans 376 residues: 1-acyl-sn-glycerol-3-phosphate acyltransferase gamma (376 aa).

Residues 1–124 (MGLLAFLKTQ…LGSSKVLAKK (124 aa)) lie on the Cytoplasmic side of the membrane. The short motif at 96–101 (HNFEID) is the HXXXXD motif element. The chain crosses the membrane as a helical span at residues 125–145 (ELLYVPLIGWTWYFLEIVFCK). Topologically, residues 146–316 (RKWEEDRDTV…TLLNFLSWAT (171 aa)) are lumenal. Residues 317–339 (ILLSPLFSFVLGVFASGSPLLIL) form a helical membrane-spanning segment. At 340 to 376 (TFLGFVGAASFGVRRLIGVTEIEKGSSYGNQEFKKKE) the chain is on the cytoplasmic side.

It belongs to the 1-acyl-sn-glycerol-3-phosphate acyltransferase family. Widely expressed with highest levels in testis, pancreas and kidney, followed by spleen, lung, adipose tissue and liver.

It is found in the endoplasmic reticulum membrane. The protein resides in the nucleus envelope. It carries out the reaction a 1-acyl-sn-glycero-3-phosphate + an acyl-CoA = a 1,2-diacyl-sn-glycero-3-phosphate + CoA. The catalysed reaction is pentadecanoyl-CoA + 1-(9Z-octadecenoyl)-sn-glycero-3-phosphate = 1-(9Z)-octadecenoyl-2-pentadecanoyl-sn-glycero-3-phosphate + CoA. The enzyme catalyses heptadecanoyl-CoA + 1-(9Z-octadecenoyl)-sn-glycero-3-phosphate = 1-(9Z)-octadecenoyl-2-heptadecanoyl-sn-glycero-3-phosphate + CoA. It catalyses the reaction 1-(9Z-octadecenoyl)-sn-glycero-3-phosphate + octadecanoyl-CoA = 1-(9Z-octadecenoyl)-2-octadecanoyl-sn-glycero-3-phosphate + CoA. It carries out the reaction nonadecanoyl-CoA + 1-(9Z-octadecenoyl)-sn-glycero-3-phosphate = 1-(9Z)-octadecenoyl-2-nonadecanoyl-sn-glycero-3-phosphate + CoA. The catalysed reaction is 1-(9Z-octadecenoyl)-sn-glycero-3-phosphate + (5Z,8Z,11Z,14Z)-eicosatetraenoyl-CoA = 1-(9Z)-octadecenoyl-2-(5Z,8Z,11Z,14Z)-eicosatetraenoyl-sn-glycero-3-phosphate + CoA. The enzyme catalyses 1-(9Z-octadecenoyl)-sn-glycero-3-phosphate + (9Z)-octadecenoyl-CoA = 1,2-di-(9Z-octadecenoyl)-sn-glycero-3-phosphate + CoA. It catalyses the reaction 1-(9Z-octadecenoyl)-sn-glycero-3-phosphate + (9Z,12Z)-octadecadienoyl-CoA = 1-(9Z)-octadecenoyl-2-(9Z,12Z)-octadecadienoyl-sn-glycero-3-phosphate + CoA. It carries out the reaction 1-(9Z-octadecenoyl)-sn-glycero-3-phosphocholine + (5Z,8Z,11Z,14Z)-eicosatetraenoyl-CoA = 1-(9Z)-octadecenoyl-2-(5Z,8Z,11Z,14Z)-icosatetraenoyl-sn-glycero-3-phosphocholine + CoA. The catalysed reaction is 1-(9Z-octadecenoyl)-sn-glycero-3-phospho-(1D-myo-inositol) + (5Z,8Z,11Z,14Z)-eicosatetraenoyl-CoA = 1-(9Z-octadecenoyl)-2-(5Z,8Z,11Z,14Z-eicosatetraenoyl)-sn-glycero-3-phospho-1D-myo-inositol + CoA. The enzyme catalyses 1-(9Z-octadecenoyl)-sn-glycero-3-phospho-L-serine + (5Z,8Z,11Z,14Z)-eicosatetraenoyl-CoA = 1-(9Z-octadecenoyl)-2-(5Z,8Z,11Z,14Z-eicosatetraenoyl)-sn-glycero-3-phospho-L-serine + CoA. It catalyses the reaction 1-hexadecanoyl-sn-glycero-3-phosphate + (9Z)-octadecenoyl-CoA = 1-hexadecanoyl-2-(9Z-octadecenoyl)-sn-glycero-3-phosphate + CoA. It carries out the reaction 1-hexadecanoyl-sn-glycero-3-phosphate + (5Z,8Z,11Z,14Z)-eicosatetraenoyl-CoA = 1-hexadecanoyl-2-(5Z,8Z,11Z,14Z-eicosatetraenoyl)-sn-glycero-3-phosphate + CoA. The catalysed reaction is 1-heptadecanoyl-sn-glycero-3-phosphate + (5Z,8Z,11Z,14Z)-eicosatetraenoyl-CoA = 1-heptadecanoyl-2-(5Z,8Z,11Z,14Z)-eicosatetraenoyl-sn-glycero-3-phosphate + CoA. The enzyme catalyses 1-octadecanoyl-sn-glycero-3-phosphate + (9Z)-octadecenoyl-CoA = 1-octadecanoyl-2-(9Z-octadecenoyl)-sn-glycero-3-phosphate + CoA. It catalyses the reaction 1-octadecanoyl-sn-glycero-3-phosphate + (5Z,8Z,11Z,14Z)-eicosatetraenoyl-CoA = 1-octadecanoyl-2-(5Z,8Z,11Z,14Z-eicosatetraenoyl)-sn-glycero-3-phosphate + CoA. It carries out the reaction 1-(9Z-octadecenoyl)-sn-glycero-3-phosphate + hexadecanoyl-CoA = 1-hexadecanoyl-2-(9Z-octadecenoyl)-sn-glycero-3-phosphate + CoA. The catalysed reaction is 1-O-(9Z-octadecenyl)-sn-glycero-3-phosphate + (5Z,8Z,11Z,14Z)-eicosatetraenoyl-CoA = 1-O-(9Z-octadecenyl)-2-(5Z,8Z,11Z,14Z-eicosatetraenoyl)-sn-glycero-3-phosphate + CoA. The enzyme catalyses a 1-acyl-sn-glycero-3-phospho-(1D-myo-inositol) + (5Z,8Z,11Z,14Z)-eicosatetraenoyl-CoA = a 1-acyl-2-(5Z,8Z,11Z,14Z-eicosatetraenoyl)-sn-glycero-3-phospho-(1D-myo-inositol) + CoA. It functions in the pathway phospholipid metabolism; CDP-diacylglycerol biosynthesis; CDP-diacylglycerol from sn-glycerol 3-phosphate: step 2/3. In terms of biological role, converts 1-acyl-sn-glycerol-3-phosphate (lysophosphatidic acid or LPA) into 1,2-diacyl-sn-glycerol-3-phosphate (phosphatidic acid or PA) by incorporating an acyl moiety at the sn-2 position of the glycerol backbone. Acts on LPA containing saturated or unsaturated fatty acids C16:0-C20:4 at the sn-1 position using C18:1, C20:4 or C18:2-CoA as the acyl donor. Also acts on lysophosphatidylcholine, lysophosphatidylinositol and lysophosphatidylserine using C18:1 or C20:4-CoA. Has a preference for arachidonoyl-CoA as a donor. Also has a modest lysophosphatidylinositol acyltransferase (LPIAT) activity, converts lysophosphatidylinositol (LPI) into phosphatidylinositol. The chain is 1-acyl-sn-glycerol-3-phosphate acyltransferase gamma (AGPAT3) from Homo sapiens (Human).